We begin with the raw amino-acid sequence, 451 residues long: Prenyltransferase anuH (451 aa).

Residues arginine 105, lysine 189, tyrosine 191, lysine 257, tyrosine 259, and tyrosine 422 each contribute to the dimethylallyl diphosphate site.

It belongs to the tryptophan dimethylallyltransferase family.

The catalysed reaction is (8S)-annullatin E + dimethylallyl diphosphate = (8S)-annullatin J + diphosphate. It participates in secondary metabolite biosynthesis. Cytochrome P450 monooxygenase; part of the gene cluster that mediates the biosynthesis of annullatin D, an alkylated aromatic polyketide with a fused dihydrobenzofuran lactone ring system that exhibits potent agonistic activities toward the cannabinoid receptors. Within the pathway, anuH uses dimethylallyl diphosphate (DMAPP) to prenylate (8S)-annullatin E to produce (8S)-annullatin J. Geranyl and farnesyl diphosphate are not consumed by anuH for prenylation. 2-hydroxymethyl-3-pentylphenol, without the hydroxyl group at the side chain, is also accepted by anuH, but only with low conversion yield. The annullatin backbone 2-hydroxymethyl-3-pentylphenol is assembled from one acetyl-CoA starter unit and 5 malonyl-CoA elongation units by cooperation of the highly reducing polyketide synthase anuA, the short-chain dehydrogenase anuB and the oxidoreductase anuC, before being hydroxylated at the C-5 alkyl chain by the cytochrome P450 monooxygenase anuE to form (8S)-annullatin E. The prenyltransferase anuH subsequently installs one isoprenyl group at the benzene ring to form (8S)-annullatin J. Enzymatic or nonenzymatic dihydro-benzofuran ring formation between the prenyl and the phenolic hydroxyl groups in (8S)-annullatin J results in two diastereomers (2S,9S)-annullatin H and compound 12. The intermediate (2S,9S)-annullatin H is then converted to (2S,9S)-annullatin D by the FAD-linked oxidoreductase anuG-catalyzed five-member lactone ring formation. The isomer 12 acts as a substrate for the short-chain dehydrogenase anuF and is oxidized to (2R)-annullatin F, which is subsequently acetylated by an acetyltransferase leading to (2R)-annullatin G formation. The remaining enzymes identified within the cluster, anuD, anuI and anuJ, seem not to be involved in annullatin biosynthesis. In Penicillium roqueforti (strain FM164), this protein is Prenyltransferase anuH.